The following is a 249-amino-acid chain: Tumor necrosis factor receptor superfamily member 13B (249 aa).

Residues 1 to 128 (MAMAFCPKDQ…LSSDQLTLYC (128 aa)) lie on the Extracellular side of the membrane. 2 TNFR-Cys repeats span residues 5–38 (FCPKDQYWDSSRKSCVSCALTCSQRSQRTCTDFC) and 42–76 (NCRKEQGRYYDHLLGACVSCDSTCTQHPQQCAHFC). Cystine bridges form between cysteine 6–cysteine 19, cysteine 22–cysteine 34, cysteine 26–cysteine 38, cysteine 43–cysteine 58, cysteine 61–cysteine 72, and cysteine 65–cysteine 76. The tract at residues 86 to 116 (LQPELGRPQAGEVEVRSDNSGRHQGSEHGPG) is disordered. Residues 98–111 (VEVRSDNSGRHQGS) show a composition bias toward basic and acidic residues. Residues 129 to 149 (TLGVCLCAIFCCFLVALASFL) form a helical; Signal-anchor for type III membrane protein membrane-spanning segment. Over 150–249 (RRRGEPLPSQ…ASTGDARPAT (100 aa)) the chain is Cytoplasmic. Residues 156–176 (LPSQPAGPRGSQANSPHAHRP) are disordered.

In terms of assembly, binds TRAF2, TRAF5 and TRAF6. Binds the NH2-terminal domain of CAMLG with its C-terminus.

The protein localises to the membrane. In terms of biological role, receptor for TNFSF13/APRIL and TNFSF13B/TALL1/BAFF/BLYS that binds both ligands with similar high affinity. Mediates calcineurin-dependent activation of NF-AT, as well as activation of NF-kappa-B and AP-1. Involved in the stimulation of B- and T-cell function and the regulation of humoral immunity. This chain is Tumor necrosis factor receptor superfamily member 13B (Tnfrsf13b), found in Mus musculus (Mouse).